Consider the following 771-residue polypeptide: Leucine-rich repeat and fibronectin type III domain-containing protein 1 (771 aa).

The signal sequence occupies residues 1-31; it reads MAPGPFSSALLSPPPAALPFLLLLWAGASRG. Residues 32–65 form the LRRNT domain; that stretch reads QPCPGRCICQNVAPTLTMLCAKTGLLFVPPAIDR. The Extracellular portion of the chain corresponds to 32–536; the sequence is QPCPGRCICQ…LRAHFLGGTM (505 aa). LRR repeat units follow at residues 66-87, 90-111, 114-135, 138-159, 163-184, 187-208, and 211-232; these read RVVE…DFAN, SLVH…AFAD, ALRA…QLRG, NLRH…AFDA, TVED…AVGQ, NLNT…TFVQ, and KLVR…GLFL. Asn87 carries an N-linked (GlcNAc...) asparagine glycan. An LRRCT domain is found at 252–298; sequence NPLHCNCELLWLRRLTREDDLETCATPEHLTDRYFWSIPEEEFLCEP. The 88-residue stretch at 299–386 folds into the Ig-like domain; sequence PLITRQAGGR…GEATAPVEVC (88 aa). A disulfide bridge connects residues Cys321 and Cys370. Residue Asn343 is glycosylated (N-linked (GlcNAc...) asparagine). The interval 397–422 is disordered; that stretch reads PAAPPPLTEPGSSDIATPGRPGANDS. The Fibronectin type-III domain maps to 424 to 520; the sequence is AERRLVAAEL…GCVQFTTAGD (97 aa). A helical transmembrane segment spans residues 537-557; that stretch reads IIAIGGVIVASVLVFIVLLMI. Residues 558–771 are Cytoplasmic-facing; that stretch reads RYKVYGDGDS…STEWMLESTV (214 aa). 2 positions are modified to phosphoserine: Ser613 and Ser718. The tract at residues 654-743 is disordered; it reads PSEETSGEES…HLDGAGGGAA (90 aa). Positions 719–732 are enriched in basic residues; sequence YPRRARRTKRHRST. The PDZ-binding motif lies at 768–771; the sequence is ESTV.

Belongs to the LRFN family. In terms of assembly, can form heteromeric complexes with LRFN2, LRFN3, LRFN4 and LRFN5. Forms homomeric complexes, but not across cell junctions. Interacts with DLG1, DLG2, DLG3 and DLG4. Interacts with 2 AMPA receptor subunits GRIA1 and GRIA2 and NMDA receptor subunit GRIN1. Post-translationally, glycosylated.

The protein resides in the membrane. It localises to the synapse. The protein localises to the postsynaptic density membrane. Its function is as follows. Promotes neurite outgrowth in hippocampal neurons. Involved in the regulation and maintenance of excitatory synapses. Induces the clustering of excitatory postsynaptic proteins, including DLG4, DLGAP1, GRIA1 and GRIN1. In Homo sapiens (Human), this protein is Leucine-rich repeat and fibronectin type III domain-containing protein 1 (LRFN1).